The following is a 670-amino-acid chain: NADH-ubiquinone oxidoreductase chain 5 (670 aa).

A run of 15 helical transmembrane segments spans residues 3–23 (LLIVFLPLLGSSVAGFFGRFL), 36–56 (VSFSSILSLIAFYEVALGASA), 76–96 (FLFDSLTVVMLIVVTFISSLV), 113–133 (FMCYLSIFTFFMLMLVTGDNF), 136–156 (LFLGWEGVGLASYLLIHFWFT), 178–198 (LALGIFGCFTLFQTVDFSTIF), 218–238 (ITLICILLFIGAVGKSAQIGL), 250–270 (TPVSALIHAATMVTAGVFMIA), 283–303 (LIVITFAGAMTSFLAATTGIL), 319–339 (LGYMIFACGISNYSVSVFHLM), 340–360 (NHAFFKALLFLSAGSVIHAMS), 375–395 (FPLTYAMMLMGSLSLIGFPFL), 425–445 (VSVLFTSYYSFRLLFLTFLVP), 461–481 (IPMAIPLILLALGSLFVGYLA), and 618–638 (SGSVYHYAFAMLLGSTPFVTF).

This sequence belongs to the complex I subunit 5 family.

It is found in the mitochondrion inner membrane. It catalyses the reaction a ubiquinone + NADH + 5 H(+)(in) = a ubiquinol + NAD(+) + 4 H(+)(out). Functionally, core subunit of the mitochondrial membrane respiratory chain NADH dehydrogenase (Complex I) that is believed to belong to the minimal assembly required for catalysis. Complex I functions in the transfer of electrons from NADH to the respiratory chain. The immediate electron acceptor for the enzyme is believed to be ubiquinone. In Triticum aestivum (Wheat), this protein is NADH-ubiquinone oxidoreductase chain 5 (ND5).